Here is a 139-residue protein sequence, read N- to C-terminus: D-ribose pyranase (139 aa).

His-20 (proton donor) is an active-site residue. Residues Asp-28, His-106, and 128 to 130 contribute to the substrate site; that span reads YAN.

This sequence belongs to the RbsD / FucU family. RbsD subfamily. Homodecamer.

It localises to the cytoplasm. It carries out the reaction beta-D-ribopyranose = beta-D-ribofuranose. It functions in the pathway carbohydrate metabolism; D-ribose degradation; D-ribose 5-phosphate from beta-D-ribopyranose: step 1/2. Functionally, catalyzes the interconversion of beta-pyran and beta-furan forms of D-ribose. This Salmonella paratyphi B (strain ATCC BAA-1250 / SPB7) protein is D-ribose pyranase.